A 122-amino-acid polypeptide reads, in one-letter code: MIQPQTHLNVADNSGARELMCIRIIGASNRRYAHIGDVIVAVIKEAIPNMPLERSEVVRAVIVRTCKELKRDNGIIIRYDDNAAVVIDQEGNPKGTRIFGAIARELRELNFTKIVSLAPEVL.

It belongs to the universal ribosomal protein uL14 family. As to quaternary structure, part of the 50S ribosomal subunit.

The protein resides in the plastid. The protein localises to the chloroplast. In terms of biological role, binds to 23S rRNA. This Nicotiana tomentosiformis (Tobacco) protein is Large ribosomal subunit protein uL14c.